Consider the following 697-residue polypeptide: Elongation factor G (697 aa).

Residues 10-285 (ERTRNIGIMA…AVVDYLPSPL (276 aa)) form the tr-type G domain. Residues 19–26 (AHIDAGKT), 83–87 (DTPGH), and 137–140 (NKMD) each bind GTP.

It belongs to the TRAFAC class translation factor GTPase superfamily. Classic translation factor GTPase family. EF-G/EF-2 subfamily.

Its subcellular location is the cytoplasm. Functionally, catalyzes the GTP-dependent ribosomal translocation step during translation elongation. During this step, the ribosome changes from the pre-translocational (PRE) to the post-translocational (POST) state as the newly formed A-site-bound peptidyl-tRNA and P-site-bound deacylated tRNA move to the P and E sites, respectively. Catalyzes the coordinated movement of the two tRNA molecules, the mRNA and conformational changes in the ribosome. This is Elongation factor G from Pediococcus pentosaceus (strain ATCC 25745 / CCUG 21536 / LMG 10740 / 183-1w).